The following is a 164-amino-acid chain: Interferon gamma (164 aa).

An N-terminal signal peptide occupies residues 1 to 19 (MTCQTYNLFVLSVIMIYYG). 2 N-linked (GlcNAc...) asparagine glycosylation sites follow: asparagine 42 and asparagine 61.

It belongs to the type II (or gamma) interferon family. As to quaternary structure, homodimer.

Its subcellular location is the secreted. Functionally, produced by lymphocytes activated by specific antigens or mitogens. IFN-gamma, in addition to having antiviral activity, has important immunoregulatory functions. It is a potent activator of macrophages, it has antiproliferative effects on transformed cells and it can potentiate the antiviral and antitumor effects of the type I interferons. The sequence is that of Interferon gamma (IFNG) from Gallus gallus (Chicken).